The sequence spans 305 residues: UDP-3-O-acyl-N-acetylglucosamine deacetylase (305 aa).

Positions 79, 238, and 242 each coordinate Zn(2+). The Proton donor role is filled by H265.

Belongs to the LpxC family. Requires Zn(2+) as cofactor.

It catalyses the reaction a UDP-3-O-[(3R)-3-hydroxyacyl]-N-acetyl-alpha-D-glucosamine + H2O = a UDP-3-O-[(3R)-3-hydroxyacyl]-alpha-D-glucosamine + acetate. It participates in glycolipid biosynthesis; lipid IV(A) biosynthesis; lipid IV(A) from (3R)-3-hydroxytetradecanoyl-[acyl-carrier-protein] and UDP-N-acetyl-alpha-D-glucosamine: step 2/6. Functionally, catalyzes the hydrolysis of UDP-3-O-myristoyl-N-acetylglucosamine to form UDP-3-O-myristoylglucosamine and acetate, the committed step in lipid A biosynthesis. The sequence is that of UDP-3-O-acyl-N-acetylglucosamine deacetylase from Shewanella woodyi (strain ATCC 51908 / MS32).